The following is a 624-amino-acid chain: uncharacterized protein (624 aa).

The segment at 108 to 138 (PTAWSGMESDSTASERSLPQRTDTTSVSSQY) is disordered. Ser112 carries the phosphoserine modification. Positions 115–138 (ESDSTASERSLPQRTDTTSVSSQY) are enriched in polar residues. Ser205 carries the phosphoserine modification. Disordered stretches follow at residues 217 to 236 (LMES…PGTR) and 305 to 329 (KREC…PVSE).

This is an uncharacterized protein from Rattus norvegicus (Rat).